A 362-amino-acid chain; its full sequence is Zinc transporter 9 (362 aa).

The signal sequence occupies residues 1–21 (MAFDLKLTACLLLAVFSLAAA). The Extracellular segment spans residues 22–42 (ADCECQPSDEGHDAAKSRTLK). The chain crosses the membrane as a helical span at residues 43–63 (VIAIFCILVGSSAGCAIPSLG). At 64 to 74 (RRFPALRPDTS) the chain is on the cytoplasmic side. The chain crosses the membrane as a helical span at residues 75 to 95 (LFFALKAFAAGVILATAFVHI). The Extracellular segment spans residues 96–120 (LPVSFDKLGSPCLVDGPWRKYPFTG). Residues 121–141 (LVAMLAAVATLLLDTIATGYF) traverse the membrane as a helical segment. The Cytoplasmic segment spans residues 142–207 (LQRAQDSRGA…EDRAKLVRHR (66 aa)). The helical transmembrane segment at 208–228 (VISQVFELGIIVHSIIIGISL) threads the bilayer. Residues 229–239 (GASESPSTIRP) lie on the Extracellular side of the membrane. Residues 240 to 260 (LVAALTFHQFFEGIGLGGCIV) form a helical membrane-spanning segment. Topologically, residues 261–269 (QARFHLKSA) are cytoplasmic. Residues 270 to 290 (VTMAIFFSLTTPVGIMIGIGI) form a helical membrane-spanning segment. The Extracellular segment spans residues 291-301 (SSAYNENSPTA). The chain crosses the membrane as a helical span at residues 302-322 (LIVEGILDAAAAGILNYMALV). At 323–341 (DLLAEDFMNPRVRKSGRLQ) the chain is on the cytoplasmic side. Residues 342 to 362 (LIISILLLVGIALMSLLGIWA) traverse the membrane as a helical segment.

It belongs to the ZIP transporter (TC 2.A.5) family.

The protein localises to the cell membrane. In terms of biological role, zinc transporter that may be involved in zinc uptake from the rhizosphere. This Oryza sativa subsp. japonica (Rice) protein is Zinc transporter 9 (ZIP9).